A 136-amino-acid chain; its full sequence is Secreted RxLR effector protein 15 (136 aa).

An N-terminal signal peptide occupies residues methionine 1–alanine 22. A RxLR motif is present at residues arginine 47–arginine 50.

This sequence belongs to the RxLR effector family.

The protein localises to the secreted. It localises to the host nucleus. Its subcellular location is the host cytoplasm. Effector that completely suppresses the host cell death induced by cell death-inducing proteins. This chain is Secreted RxLR effector protein 15, found in Plasmopara viticola (Downy mildew of grapevine).